The chain runs to 379 residues: Cysteine-rich receptor-like protein kinase 44 (379 aa).

One can recognise a Protein kinase domain in the interval 56-336 (FSPYNHLGEG…VRMLNANSFT (281 aa)). ATP contacts are provided by residues 62 to 70 (LGEGGFGAV) and lysine 84. At tyrosine 129 the chain carries Phosphotyrosine. Aspartate 181 acts as the Proton acceptor in catalysis. Residue serine 185 is modified to Phosphoserine. Threonine 223 is modified (phosphothreonine). Tyrosine 231 carries the post-translational modification Phosphotyrosine.

This sequence belongs to the protein kinase superfamily. Ser/Thr protein kinase family. CRK subfamily.

It catalyses the reaction L-seryl-[protein] + ATP = O-phospho-L-seryl-[protein] + ADP + H(+). The enzyme catalyses L-threonyl-[protein] + ATP = O-phospho-L-threonyl-[protein] + ADP + H(+). This Arabidopsis thaliana (Mouse-ear cress) protein is Cysteine-rich receptor-like protein kinase 44.